The sequence spans 798 residues: Bromodomain-containing protein 2 (798 aa).

The residue at position 1 (M1) is an N-acetylmethionine. Residues 1–21 are disordered; that stretch reads MLQNVTPHKLPGEGNAGLLGL. T6 is subject to Phosphothreonine. At S36 the chain carries Phosphoserine. The interval 53–72 is disordered; that stretch reads LQLAPANPPPPEVSNPKKPG. A Bromo 1 domain is found at 73–179; sequence RVTNQLQYLH…KIFLQKVASM (107 aa). Positions 111, 154, 155, 156, 159, and 160 each coordinate a protein. 3 disordered regions span residues 267–348, 455–648, and 735–798; these read PPAQ…LSEQ, EPLE…KRQL, and EKRL…SDSG. The span at 284–297 shows a compositional bias: low complexity; that stretch reads TTTPTPTAILAPGS. Phosphoserine is present on residues S297, S300, and S304. A compositionally biased stretch (basic and acidic residues) spans 315–331; it reads MRRESGRPIKPPRKDLP. The region spanning 343-452 is the Bromo 2 domain; sequence GKLSEQLKHC…DVFEFRYAKM (110 aa). The span at 480 to 512 shows a compositional bias: acidic residues; that stretch reads SSEESSSESSSEEEEEEDEEDEEEESESSDSEE. Residues 542–564 are compositionally biased toward basic residues; the sequence is KPKRKREKKEKKKKRKAEKHRGR. The Nuclear localization signal signature appears at 553-557; it reads KKKRK. The 83-residue stretch at 630–712 folds into the NET domain; the sequence is DSEEEEESRP…SCLRKKPRKP (83 aa). S631 carries the post-translational modification Phosphoserine. Over residues 637-648 the composition is skewed to basic and acidic residues; that stretch reads SRPMSYDEKRQL. The segment covering 772–792 has biased composition (low complexity); it reads SASSSSSDSSSSSSSSSSSDT.

The protein belongs to the BET family. As to quaternary structure, homodimer. Interacts with E2F1. Interacts with (acetylated) STAT3; promoting STAT3 recruitment to chromatin. Interacts with CTCF; promoting BRD2 recruitment to chromatin.

It is found in the nucleus. Its subcellular location is the chromosome. Chromatin reader protein that specifically recognizes and binds histone H4 acetylated at 'Lys-5' and 'Lys-12' (H4K5ac and H4K12ac, respectively), thereby controlling gene expression and remodeling chromatin structures. Recruits transcription factors and coactivators to target gene sites, and activates RNA polymerase II machinery for transcriptional elongation. Plays a key role in genome compartmentalization via its association with CTCF and cohesin: recruited to chromatin by CTCF and promotes formation of topologically associating domains (TADs) via its ability to bind acetylated histones, contributing to CTCF boundary formation and enhancer insulation. Also recognizes and binds acetylated non-histone proteins, such as STAT3. Involved in inflammatory response by regulating differentiation of naive CD4(+) T-cells into T-helper Th17: recognizes and binds STAT3 acetylated at 'Lys-87', promoting STAT3 recruitment to chromatin. In addition to acetylated lysines, also recognizes and binds lysine residues on histones that are both methylated and acetylated on the same side chain to form N6-acetyl-N6-methyllysine (Kacme), an epigenetic mark of active chromatin associated with increased transcriptional initiation. Specifically binds histone H4 acetyl-methylated at 'Lys-5' and 'Lys-12' (H4K5acme and H4K12acme, respectively). The polypeptide is Bromodomain-containing protein 2 (Brd2) (Rattus norvegicus (Rat)).